A 371-amino-acid polypeptide reads, in one-letter code: Succinyl-diaminopimelate desuccinylase (371 aa).

H68 is a binding site for Zn(2+). Residue D70 is part of the active site. Residue D99 participates in Zn(2+) binding. The active-site Proton acceptor is E130. Zn(2+) is bound by residues E131, E159, and H344.

Belongs to the peptidase M20A family. DapE subfamily. Homodimer. Zn(2+) serves as cofactor. The cofactor is Co(2+).

The catalysed reaction is N-succinyl-(2S,6S)-2,6-diaminopimelate + H2O = (2S,6S)-2,6-diaminopimelate + succinate. The protein operates within amino-acid biosynthesis; L-lysine biosynthesis via DAP pathway; LL-2,6-diaminopimelate from (S)-tetrahydrodipicolinate (succinylase route): step 3/3. Its function is as follows. Catalyzes the hydrolysis of N-succinyl-L,L-diaminopimelic acid (SDAP), forming succinate and LL-2,6-diaminopimelate (DAP), an intermediate involved in the bacterial biosynthesis of lysine and meso-diaminopimelic acid, an essential component of bacterial cell walls. This Acidiphilium cryptum (strain JF-5) protein is Succinyl-diaminopimelate desuccinylase.